We begin with the raw amino-acid sequence, 245 residues long: Complement C1q subcomponent subunit C (245 aa).

The signal sequence occupies residues 1-28 (MDVGPSSLPHLGLKLLLLLLLLPLRGQA). Residues 31–112 (GCYGIPGMPG…GIPGEPGEEG (82 aa)) enclose the Collagen-like domain. 4-hydroxyproline is present on residues proline 36, proline 39, proline 42, proline 45, proline 54, and proline 63. The tract at residues 45-113 (PGKDGYDGLP…IPGEPGEEGR (69 aa)) is disordered. Residues 54-71 (PGPKGEPGIPAIPGIRGP) show a composition bias toward low complexity. Lysine 75 is subject to 5-hydroxylysine. A glycan (O-linked (Gal...) hydroxylysine) is linked at lysine 75. 4-hydroxyproline occurs at positions 81, 93, 96, 99, and 105. The segment covering 90–99 (MGPPGMPGVP) has biased composition (pro residues). Positions 115–245 (KQKFQSVFTV…VFSGFLLFPD (131 aa)) constitute a C1q domain. A disulfide bridge links cysteine 179 with cysteine 193.

As to quaternary structure, core component of the complement C1 complex, a calcium-dependent complex composed of 1 molecule of the C1Q subcomplex, 2 molecules of C1R and 2 molecules of C1S. The C1Q subcomplex is composed 18 subunits: 3 chains of C1QA, C1QB, and C1QC trimerize to form 6 collagen-like triple helices connected to six globular ligand-recognition modules (C1q domain). O-linked glycans consist of Glc-Gal disaccharides bound to the oxygen atom of post-translationally added hydroxyl groups.

Its subcellular location is the secreted. The protein resides in the cell surface. Its activity is regulated as follows. The C1Q subcomplex is inhibited by sulfated molecules, such as triterpenoid sulfates, heparan sulfate, or chondroitin sulfates. Functionally, core component of the complement C1 complex, a multiprotein complex that initiates the classical pathway of the complement system, a cascade of proteins that leads to phagocytosis and breakdown of pathogens and signaling that strengthens the adaptive immune system. The classical complement pathway is initiated by the C1Q subcomplex of the C1 complex, which specifically binds IgG or IgM immunoglobulins complexed with antigens, forming antigen-antibody complexes on the surface of pathogens: C1QA, together with C1QB and C1QC, specifically recognizes and binds the Fc regions of IgG or IgM via its C1q domain. Immunoglobulin-binding activates the proenzyme C1R, which cleaves C1S, initiating the proteolytic cascade of the complement system. The C1Q subcomplex is activated by a hexamer of IgG complexed with antigens, while it is activated by a pentameric IgM. The C1Q subcomplex also recognizes and binds phosphatidylserine exposed on the surface of cells undergoing programmed cell death, possibly promoting activation of the complement system. In Homo sapiens (Human), this protein is Complement C1q subcomponent subunit C.